The following is a 304-amino-acid chain: Acetyl-coenzyme A carboxylase carboxyl transferase subunit beta (304 aa).

The CoA carboxyltransferase N-terminal domain maps to 25–294 (VWTKCDSCGQ…PSVVESKADT (270 aa)). Positions 29, 32, 48, and 51 each coordinate Zn(2+). The C4-type zinc finger occupies 29 to 51 (CDSCGQVLYRAELERNLEVCPKC).

This sequence belongs to the AccD/PCCB family. As to quaternary structure, acetyl-CoA carboxylase is a heterohexamer composed of biotin carboxyl carrier protein (AccB), biotin carboxylase (AccC) and two subunits each of ACCase subunit alpha (AccA) and ACCase subunit beta (AccD). Zn(2+) is required as a cofactor.

Its subcellular location is the cytoplasm. It carries out the reaction N(6)-carboxybiotinyl-L-lysyl-[protein] + acetyl-CoA = N(6)-biotinyl-L-lysyl-[protein] + malonyl-CoA. It participates in lipid metabolism; malonyl-CoA biosynthesis; malonyl-CoA from acetyl-CoA: step 1/1. Functionally, component of the acetyl coenzyme A carboxylase (ACC) complex. Biotin carboxylase (BC) catalyzes the carboxylation of biotin on its carrier protein (BCCP) and then the CO(2) group is transferred by the transcarboxylase to acetyl-CoA to form malonyl-CoA. This Yersinia pseudotuberculosis serotype O:1b (strain IP 31758) protein is Acetyl-coenzyme A carboxylase carboxyl transferase subunit beta.